An 887-amino-acid chain; its full sequence is Leucine--tRNA ligase (887 aa).

The 'HIGH' region motif lies at 48-58 (PYPSGKLHMGH). Residues 644–648 (TMSKS) carry the 'KMSKS' region motif. K647 is a binding site for ATP.

This sequence belongs to the class-I aminoacyl-tRNA synthetase family.

It localises to the cytoplasm. It catalyses the reaction tRNA(Leu) + L-leucine + ATP = L-leucyl-tRNA(Leu) + AMP + diphosphate. The polypeptide is Leucine--tRNA ligase (Leptothrix cholodnii (strain ATCC 51168 / LMG 8142 / SP-6) (Leptothrix discophora (strain SP-6))).